A 362-amino-acid chain; its full sequence is Protein mom-2 (362 aa).

Positions 1–24 (MHINTPVLLAIIYFLVFAPKSADA) are cleaved as a signal peptide. 5 cysteine pairs are disulfide-bonded: C80/C91, C129/C137, C139/C167, C217/C231, and C219/C226. N90 is a glycosylation site (N-linked (GlcNAc...) asparagine). S223 carries the O-palmitoleoyl serine; by mom-1 lipid modification. A disordered region spans residues 263–282 (TVRSSPSAGSSGRSERFARN). The span at 265 to 274 (RSSPSAGSSG) shows a compositional bias: low complexity. Cystine bridges form between C304/C322, C313/C317, C321/C361, C337/C352, C339/C349, and C344/C345.

Belongs to the Wnt family. Post-translationally, palmitoleoylation is required for efficient binding to frizzled receptors. Depalmitoleoylation leads to Wnt signaling pathway inhibition. Expressed by anchor cell and vulva precursor cell descendants P5.ppa, P5.ppp, P7.paa and P7.pap. Expressed in the tail and weakly expressed in the vulva and body wall muscles.

It localises to the secreted. It is found in the extracellular space. The protein resides in the extracellular matrix. Ligand for members of the frizzled family of seven transmembrane receptors. Required in embryonic development for endoderm specification and the correct positioning and orientation of the mitotic spindles and division planes in blastomere cells. Involved in cleavage axis determination. Binds to receptor tyrosine kinase cam-1. Together with wnt ligand lin-44, plays a role in controlling vulva precursor cell P7.p lineage orientation during vulva development, probably by acting as a ligand for tyrosine kinase receptor lin-18. May act redundantly with other Wnt ligands such as cwn-1 and cwn-2 to control seam cell polarity. The sequence is that of Protein mom-2 (mom-2) from Caenorhabditis elegans.